The following is a 111-amino-acid chain: Large ribosomal subunit protein uL22 (111 aa).

Belongs to the universal ribosomal protein uL22 family. In terms of assembly, part of the 50S ribosomal subunit.

Functionally, this protein binds specifically to 23S rRNA; its binding is stimulated by other ribosomal proteins, e.g. L4, L17, and L20. It is important during the early stages of 50S assembly. It makes multiple contacts with different domains of the 23S rRNA in the assembled 50S subunit and ribosome. Its function is as follows. The globular domain of the protein is located near the polypeptide exit tunnel on the outside of the subunit, while an extended beta-hairpin is found that lines the wall of the exit tunnel in the center of the 70S ribosome. The chain is Large ribosomal subunit protein uL22 from Thermoanaerobacter pseudethanolicus (strain ATCC 33223 / 39E) (Clostridium thermohydrosulfuricum).